The sequence spans 1146 residues: Large proline-rich protein BAG6 (1146 aa).

Residue M1 is modified to N-acetylmethionine. A Ubiquitin-like domain is found at 17-92 (LEVLVKTLDS…HLVERAPPQT (76 aa)). 5 disordered regions span residues 87 to 128 (RAPP…HDRN), 186 to 268 (RGGT…HPSP), 381 to 436 (TMTG…TSHP), 457 to 525 (QDSG…QGAG), and 555 to 618 (PGMA…SAAD). S96 is subject to Phosphoserine. Positions 96 to 108 (SGASSGTGSASAT) are enriched in low complexity. A compositionally biased stretch (gly residues) spans 109–122 (HGGGPLPGTRGPGA). Position 117 is a phosphothreonine (T117). The segment covering 208 to 217 (VALNSQTSEP) has biased composition (polar residues). 2 consecutive repeat copies span residues 236–265 (RPPT…APNH) and 410–438 (PSSA…HPRV). Positions 236-650 (RPPTQTPELP…LASPTITVAV (415 aa)) are 4 X 29 AA approximate repeats. The span at 239-257 (TQTPELPPSGPAPAGPAPA) shows a compositional bias: pro residues. A compositionally biased stretch (low complexity) spans 394 to 413 (GAEAASPGSGQASSLPPSSA). 2 stretches are compositionally biased toward pro residues: residues 422 to 433 (APPPGPAPPPAT) and 502 to 515 (PTPP…PGGP). 2 stretches are compositionally biased toward low complexity: residues 555–573 (PGMA…AQAP) and 583–601 (PATA…TAGP). 2 tandem repeats follow at residues 589–616 (SAGT…QPSA) and 622–650 (SQLL…TVAV). Residues 603–614 (PGGPAQPPPPQP) are compositionally biased toward pro residues. 2 disordered regions span residues 666–711 (ASQA…ESLP) and 961–1146 (PQAL…ADDP). Over residues 670 to 694 (APPPPPPPPPPPPAPEQQTTPPPGS) the composition is skewed to pro residues. The segment covering 977–986 (TSPEPQREDA) has biased composition (basic and acidic residues). S978 and S987 each carry phosphoserine. Over residues 1021 to 1034 (AEPWAAAVPPEWVP) the composition is skewed to low complexity. The segment at 1024-1054 (WAAAVPPEWVPIIQQDIQSQRKVKPQPPLSD) is required for interaction with GET4. Positions 1026–1068 (AAVPPEWVPIIQQDIQSQRKVKPQPPLSDAYLSGMPAKRRKTM) match the Nuclear localization site motif. The sufficient for the delivery of client proteins to the endoplasmic reticulum stretch occupies residues 1036 to 1146 (IQQDIQSQRK…NAHRAFADDP (111 aa)). T1067 is subject to Phosphothreonine. The segment at 1072-1129 (GPQLLLSEAVSRAAKAAGARPLTSPESLSRDLEAPEVQESYRQQLRSDIQKRLQEDPN) is BAG-similar domain, required and sufficient for interaction with UBL4A. Low complexity predominate over residues 1080-1090 (AVSRAAKAAGA). 2 positions are modified to phosphoserine: S1095 and S1131.

As to quaternary structure, component of the BAG6/BAT3 complex, also named BAT3 complex, at least composed of BAG6, UBL4A and GET4/TRC35. Interacts with GET4; the interaction is direct and localizes BAG6 in the cytosol. Interacts with UBL4A; the interaction is direct and required for UBL4A protein stability. Interacts with AIFM1. Interacts with HSPA2. Interacts with CTCFL. Interacts with p300/EP300. Interacts (via ubiquitin-like domain) with RNF126; required for BAG6-dependent ubiquitination of proteins mislocalized to the cytosol. Interacts (via ubiquitin-like domain) with SGTA; SGTA competes with RNF126 by binding the same region of BAG6, thereby promoting deubiquitination of BAG6-target proteins and rescuing them from degradation. Interacts with ricin A chain. Interacts with VCP and AMFR; both form the VCP/p97-AMFR/gp78 complex. Interacts with SYVN1. Interacts with USP13; the interaction is direct and may mediate UBL4A deubiquitination. Interacts with ZFAND2B. Interacts with KPNA2. Interacts with UBQLN4. Post-translationally, ricin can induce a cleavage by the caspase CASP3. The released C-terminal peptide induces apoptosis.

It is found in the cytoplasm. The protein resides in the cytosol. It localises to the nucleus. The protein localises to the secreted. Its subcellular location is the extracellular exosome. In terms of biological role, ATP-independent molecular chaperone preventing the aggregation of misfolded and hydrophobic patches-containing proteins. Functions as part of a cytosolic protein quality control complex, the BAG6/BAT3 complex, which maintains these client proteins in a soluble state and participates in their proper delivery to the endoplasmic reticulum or alternatively can promote their sorting to the proteasome where they undergo degradation. The BAG6/BAT3 complex is involved in the post-translational delivery of tail-anchored/type II transmembrane proteins to the endoplasmic reticulum membrane. Recruited to ribosomes, it interacts with the transmembrane region of newly synthesized tail-anchored proteins and together with SGTA and ASNA1 mediates their delivery to the endoplasmic reticulum. Client proteins that cannot be properly delivered to the endoplasmic reticulum are ubiquitinated by RNF126, an E3 ubiquitin-protein ligase associated with BAG6 and are sorted to the proteasome. SGTA which prevents the recruitment of RNF126 to BAG6 may negatively regulate the ubiquitination and the proteasomal degradation of client proteins. Similarly, the BAG6/BAT3 complex also functions as a sorting platform for proteins of the secretory pathway that are mislocalized to the cytosol either delivering them to the proteasome for degradation or to the endoplasmic reticulum. The BAG6/BAT3 complex also plays a role in the endoplasmic reticulum-associated degradation (ERAD), a quality control mechanism that eliminates unwanted proteins of the endoplasmic reticulum through their retrotranslocation to the cytosol and their targeting to the proteasome. It maintains these retrotranslocated proteins in an unfolded yet soluble state condition in the cytosol to ensure their proper delivery to the proteasome. BAG6 is also required for selective ubiquitin-mediated degradation of defective nascent chain polypeptides by the proteasome. In this context, it may participate in the production of antigenic peptides and play a role in antigen presentation in immune response. BAG6 is also involved in endoplasmic reticulum stress-induced pre-emptive quality control, a mechanism that selectively attenuates the translocation of newly synthesized proteins into the endoplasmic reticulum and reroutes them to the cytosol for proteasomal degradation. BAG6 may ensure the proper degradation of these proteins and thereby protects the endoplasmic reticulum from protein overload upon stress. By inhibiting the polyubiquitination and subsequent proteasomal degradation of HSPA2 it may also play a role in the assembly of the synaptonemal complex during spermatogenesis. Also positively regulates apoptosis by interacting with and stabilizing the proapoptotic factor AIFM1. By controlling the steady-state expression of the IGF1R receptor, indirectly regulates the insulin-like growth factor receptor signaling pathway. Functionally, involved in DNA damage-induced apoptosis: following DNA damage, accumulates in the nucleus and forms a complex with p300/EP300, enhancing p300/EP300-mediated p53/TP53 acetylation leading to increase p53/TP53 transcriptional activity. When nuclear, may also act as a component of some chromatin regulator complex that regulates histone 3 'Lys-4' dimethylation (H3K4me2). Released extracellularly via exosomes, it is a ligand of the natural killer/NK cells receptor NCR3 and stimulates NK cells cytotoxicity. It may thereby trigger NK cells cytotoxicity against neighboring tumor cells and immature myeloid dendritic cells (DC). Its function is as follows. May mediate ricin-induced apoptosis. The sequence is that of Large proline-rich protein BAG6 from Rattus norvegicus (Rat).